Here is a 437-residue protein sequence, read N- to C-terminus: Testis-specific Y-encoded-like protein 1 (437 aa).

A disordered region spans residues methionine 1–proline 81. Positions threonine 11 to serine 26 are enriched in polar residues. A compositionally biased stretch (basic and acidic residues) spans glutamine 28–serine 40. Residue lysine 156 forms a Glycyl lysine isopeptide (Lys-Gly) (interchain with G-Cter in SUMO2) linkage.

Belongs to the nucleosome assembly protein (NAP) family. Ubiquitinated by the CRL2(APPBP2) complex, which recognizes the Arg-Xaa-Xaa-Gly sequence at the C-terminus, leading to its degradation. In terms of tissue distribution, expressed in testis, ovary, liver, spleen, brain, kidney, prostate, lung, liver, and heart.

It is found in the nucleus. The protein localises to the nucleolus. This chain is Testis-specific Y-encoded-like protein 1 (TSPYL1), found in Homo sapiens (Human).